A 213-amino-acid polypeptide reads, in one-letter code: Na(+)-translocating NADH-quinone reductase subunit D (213 aa).

6 helical membrane-spanning segments follow: residues 22 to 42 (LIAILGICSALAVTTTVTTAL), 43 to 63 (TMGFAVSFVTGCSSFVVSLLR), 77 to 97 (IIISLFVILIDQFLKAFFFTI), 101 to 121 (LSVFVGLIITNCIVMGRAESM), 131 to 151 (FLDGLGSGLGYGWVLVCISII), and 183 to 203 (LGLMVLAPSAFFLLGIMIWIV).

This sequence belongs to the NqrDE/RnfAE family. Composed of six subunits; NqrA, NqrB, NqrC, NqrD, NqrE and NqrF.

Its subcellular location is the cell inner membrane. The catalysed reaction is a ubiquinone + n Na(+)(in) + NADH + H(+) = a ubiquinol + n Na(+)(out) + NAD(+). In terms of biological role, NQR complex catalyzes the reduction of ubiquinone-1 to ubiquinol by two successive reactions, coupled with the transport of Na(+) ions from the cytoplasm to the periplasm. NqrA to NqrE are probably involved in the second step, the conversion of ubisemiquinone to ubiquinol. This is Na(+)-translocating NADH-quinone reductase subunit D from Chlamydia trachomatis serovar A (strain ATCC VR-571B / DSM 19440 / HAR-13).